A 279-amino-acid chain; its full sequence is Fatty acid metabolism regulator protein (279 aa).

Residues 6–74 (KSPAGFAEKY…HGKPTKVNQF (69 aa)) form the HTH gntR-type domain. Positions 34–53 (ERELSELIGVTRTTLREVLQ) form a DNA-binding region, H-T-H motif.

Homodimer.

It localises to the cytoplasm. Multifunctional regulator of fatty acid metabolism. The sequence is that of Fatty acid metabolism regulator protein from Vibrio vulnificus (strain CMCP6).